The chain runs to 78 residues: Acyl carrier protein (78 aa).

Residues Ser2–Gln77 form the Carrier domain. At Ser37 the chain carries O-(pantetheine 4'-phosphoryl)serine.

This sequence belongs to the acyl carrier protein (ACP) family. 4'-phosphopantetheine is transferred from CoA to a specific serine of apo-ACP by AcpS. This modification is essential for activity because fatty acids are bound in thioester linkage to the sulfhydryl of the prosthetic group.

It localises to the cytoplasm. It functions in the pathway lipid metabolism; fatty acid biosynthesis. Its function is as follows. Carrier of the growing fatty acid chain in fatty acid biosynthesis. The chain is Acyl carrier protein from Pseudomonas putida (strain ATCC 47054 / DSM 6125 / CFBP 8728 / NCIMB 11950 / KT2440).